Consider the following 335-residue polypeptide: Probable pectinesterase 29 (335 aa).

Residues 1–24 (MGTHRIFIGLIALCCFCLPHLIEA) form the signal peptide. N-linked (GlcNAc...) asparagine glycosylation occurs at N43. Catalysis depends on D166, which acts as the Proton donor. D187 functions as the Nucleophile in the catalytic mechanism. The substrate site is built by R248 and W250. An N-linked (GlcNAc...) asparagine glycan is attached at N262.

This sequence belongs to the pectinesterase family. As to expression, expressed in flower buds.

The protein localises to the secreted. The protein resides in the cell wall. The enzyme catalyses [(1-&gt;4)-alpha-D-galacturonosyl methyl ester](n) + n H2O = [(1-&gt;4)-alpha-D-galacturonosyl](n) + n methanol + n H(+). It functions in the pathway glycan metabolism; pectin degradation; 2-dehydro-3-deoxy-D-gluconate from pectin: step 1/5. Functionally, acts in the modification of cell walls via demethylesterification of cell wall pectin. The chain is Probable pectinesterase 29 (PME29) from Arabidopsis thaliana (Mouse-ear cress).